The primary structure comprises 453 residues: Endoglucanase A (453 aa).

Positions 1-26 (MNCRKYLLSGLAVFGLAATSAVAALS) are cleaved as a signal peptide. Asp-82 (nucleophile) is an active-site residue. The interval 115–126 (TTPTTRKPTTTP) is linker ('hinge') (Pro-Thr box). His-417 is an active-site residue.

This sequence belongs to the glycosyl hydrolase 9 (cellulase E) family. As to quaternary structure, monomer.

Its subcellular location is the periplasm. The enzyme catalyses Endohydrolysis of (1-&gt;4)-beta-D-glucosidic linkages in cellulose, lichenin and cereal beta-D-glucans.. High levels of endoglucanase activity detected on acid-swollen cellulose, ball-milled cellulose, and carboxymethyl cellulose; moderate levels detected on filter paper, phosphoric acid-swollen cellulose, lichenan, and xylan. The protein is Endoglucanase A (endA) of Fibrobacter succinogenes (Bacteroides succinogenes).